The chain runs to 266 residues: Norfluorocurarine synthase 1 (266 aa).

The 111-residue stretch at 11-121 (HFVLVHGAGH…VMPDAVHPPS (111 aa)) folds into the AB hydrolase-1 domain. Active-site residues include serine 86, aspartate 216, and histidine 244.

The protein belongs to the AB hydrolase superfamily. In terms of assembly, homodimer. As to expression, mainly expressed in roots.

The catalysed reaction is 17-dehydropreakuammicine + H2O = norfluorocurarine + methanol + CO2. The protein operates within alkaloid biosynthesis. In terms of biological role, hydrolase involved in the biosynthesis of curare monoterpene indole alkaloids (MIAs), natural products such as strychnine, a neurotoxic compound used as a pesticide to control rodents, and its pharmacologically active derivatives, including brucine, used to regulate blood pressure. Curare alkaloids act as animal glycine receptor antagonists. Catalyzes the conversion of dehydropreakuammicine to norfluorocurarine. This chain is Norfluorocurarine synthase 1, found in Strychnos nux-vomica (Poison nut).